Reading from the N-terminus, the 1330-residue chain is Sister chromatid cohesion protein PDS5 homolog A (1330 aa).

Residues serine 387–tyrosine 423 form an HEAT repeat. The interval valine 1138–arginine 1330 is disordered. The span at serine 1160–serine 1171 shows a compositional bias: low complexity. The span at serine 1216 to threonine 1225 shows a compositional bias: polar residues.

It belongs to the PDS5 family. In terms of assembly, interacts with the cohesin complex. Binds chromatin in a cohesin-dependent manner.

It is found in the nucleus. In terms of biological role, may regulate sister chromatid cohesion during mitosis and couple it to DNA replication. In Gallus gallus (Chicken), this protein is Sister chromatid cohesion protein PDS5 homolog A.